Here is a 273-residue protein sequence, read N- to C-terminus: Pantothenate synthetase (273 aa).

27–34 contributes to the ATP binding site; sequence MGALHQGH. Catalysis depends on His34, which acts as the Proton donor. Position 58 (Gln58) interacts with (R)-pantoate. Gln58 contributes to the beta-alanine binding site. 144-147 is a binding site for ATP; that stretch reads GKKD. A (R)-pantoate-binding site is contributed by Gln150. Residues Val173 and 181–184 contribute to the ATP site; that span reads LSSR.

Belongs to the pantothenate synthetase family. As to quaternary structure, homodimer.

Its subcellular location is the cytoplasm. The catalysed reaction is (R)-pantoate + beta-alanine + ATP = (R)-pantothenate + AMP + diphosphate + H(+). Its pathway is cofactor biosynthesis; (R)-pantothenate biosynthesis; (R)-pantothenate from (R)-pantoate and beta-alanine: step 1/1. Functionally, catalyzes the condensation of pantoate with beta-alanine in an ATP-dependent reaction via a pantoyl-adenylate intermediate. The sequence is that of Pantothenate synthetase from Nitratiruptor sp. (strain SB155-2).